The following is a 332-amino-acid chain: Glycerol-3-phosphate dehydrogenase [NAD(P)+] (332 aa).

NADPH-binding residues include serine 11, phenylalanine 12, lysine 32, and lysine 106. The sn-glycerol 3-phosphate site is built by lysine 106, glycine 137, and serine 139. Position 141 (alanine 141) interacts with NADPH. Sn-glycerol 3-phosphate is bound by residues lysine 192, aspartate 245, serine 255, arginine 256, and asparagine 257. The active-site Proton acceptor is lysine 192. Position 256 (arginine 256) interacts with NADPH. Residues valine 280 and glutamate 282 each contribute to the NADPH site.

Belongs to the NAD-dependent glycerol-3-phosphate dehydrogenase family.

The protein resides in the cytoplasm. The catalysed reaction is sn-glycerol 3-phosphate + NAD(+) = dihydroxyacetone phosphate + NADH + H(+). It carries out the reaction sn-glycerol 3-phosphate + NADP(+) = dihydroxyacetone phosphate + NADPH + H(+). The protein operates within membrane lipid metabolism; glycerophospholipid metabolism. Functionally, catalyzes the reduction of the glycolytic intermediate dihydroxyacetone phosphate (DHAP) to sn-glycerol 3-phosphate (G3P), the key precursor for phospholipid synthesis. The sequence is that of Glycerol-3-phosphate dehydrogenase [NAD(P)+] from Staphylococcus epidermidis (strain ATCC 12228 / FDA PCI 1200).